The primary structure comprises 1624 residues: Putative serine/threonine-protein kinase/receptor R831 (1624 aa).

The first 25 residues, 1-25 (MHSVYTKYTIILILLVIYQGLPTNT), serve as a signal peptide directing secretion. N152, N169, N200, N205, N225, N240, N245, N292, N364, N479, N541, N720, and N737 each carry an N-linked (GlcNAc...) asparagine; by host glycan. The helical transmembrane segment at 747-767 (VIPIACIFGLLLLTLLIVIIF) threads the bilayer. The Protein kinase 1 domain occupies 786 to 1049 (LEIGETLGTG…EIMTRLSNIL (264 aa)). Residues 792-800 (LGTGGYGEV) and K813 each bind ATP. The active-site Proton acceptor is D908. Residues 1054–1093 (NMTSGTSSSSLSSGGIGKSITDSKSSNSRSSVESSNTSNT) are compositionally biased toward low complexity. Residues 1054–1101 (NMTSGTSSSSLSSGGIGKSITDSKSSNSRSSVESSNTSNTFRGIDRHN) are disordered. The Guanylate cyclase domain occupies 1109–1252 (TVAFIDIISA…STVNITGKIT (144 aa)). In terms of domain architecture, Protein kinase 2 spans 1364-1615 (ISIGKQIGLG…MTEVVQQLML (252 aa)). ATP-binding positions include 1370 to 1378 (IGLGSYGIV) and K1391. D1487 serves as the catalytic Proton acceptor.

The protein localises to the membrane. It carries out the reaction L-seryl-[protein] + ATP = O-phospho-L-seryl-[protein] + ADP + H(+). It catalyses the reaction L-threonyl-[protein] + ATP = O-phospho-L-threonyl-[protein] + ADP + H(+). In Acanthamoeba polyphaga (Amoeba), this protein is Putative serine/threonine-protein kinase/receptor R831.